A 194-amino-acid chain; its full sequence is Lysozyme g (194 aa).

Active-site residues include E71 and D84.

This sequence belongs to the glycosyl hydrolase 23 family. Expressed in intestine, liver, spleen, anterior kidney, posterior kidney, heart, gill, muscle and leukocytes.

The enzyme catalyses Hydrolysis of (1-&gt;4)-beta-linkages between N-acetylmuramic acid and N-acetyl-D-glucosamine residues in a peptidoglycan and between N-acetyl-D-glucosamine residues in chitodextrins.. In terms of biological role, has lytic activity against M.lysodeikticus, V.alginolyticus from Epinephelus fario, V.vulnificus from culture water, A.hydrophila from soft-shell turtle, A.hydrophila from goldfish and V.parahaemolyticus, P.fluorescens and V.fluvialis from culture water. This Epinephelus coioides (Orange-spotted grouper) protein is Lysozyme g.